Reading from the N-terminus, the 41-residue chain is Photosystem II reaction center protein L (41 aa).

The helical transmembrane segment at 20–40 threads the bilayer; it reads SLYLGLLLVFVVGLLFSSYFL.

It belongs to the PsbL family. As to quaternary structure, PSII is composed of 1 copy each of membrane proteins PsbA, PsbB, PsbC, PsbD, PsbE, PsbF, PsbH, PsbI, PsbJ, PsbK, PsbL, PsbM, PsbT, PsbX, PsbY, PsbZ, Psb30/Ycf12, peripheral proteins PsbO, CyanoQ (PsbQ), PsbU, PsbV and a large number of cofactors. It forms dimeric complexes.

Its subcellular location is the cellular thylakoid membrane. In terms of biological role, one of the components of the core complex of photosystem II (PSII). PSII is a light-driven water:plastoquinone oxidoreductase that uses light energy to abstract electrons from H(2)O, generating O(2) and a proton gradient subsequently used for ATP formation. It consists of a core antenna complex that captures photons, and an electron transfer chain that converts photonic excitation into a charge separation. This subunit is found at the monomer-monomer interface and is required for correct PSII assembly and/or dimerization. The polypeptide is Photosystem II reaction center protein L (Synechococcus sp. (strain JA-3-3Ab) (Cyanobacteria bacterium Yellowstone A-Prime)).